A 175-amino-acid chain; its full sequence is Large ribosomal subunit protein uL22y (175 aa).

Residues 153–163 (EKEEPVKKEPE) show a composition bias toward basic and acidic residues. Positions 153–175 (EKEEPVKKEPETQLAAKSKKSAA) are disordered.

The protein belongs to the universal ribosomal protein uL22 family.

The polypeptide is Large ribosomal subunit protein uL22y (RPL17B) (Arabidopsis thaliana (Mouse-ear cress)).